A 205-amino-acid chain; its full sequence is Holliday junction branch migration complex subunit RuvA (205 aa).

The tract at residues 1-64 (MIGKLKGIID…EDQIKLFGFR (64 aa)) is domain I. Positions 65–143 (TDTEREWFRL…ALSAVDPAVV (79 aa)) are domain II. Residues 144 to 154 (KLSGAIDDNRA) are flexible linker. Positions 154 to 205 (APRAVTDAISALVNLGYGQPQAAAAVATASRTAGEDAETAQLIKLGLKELSK) are domain III.

This sequence belongs to the RuvA family. Homotetramer. Forms an RuvA(8)-RuvB(12)-Holliday junction (HJ) complex. HJ DNA is sandwiched between 2 RuvA tetramers; dsDNA enters through RuvA and exits via RuvB. An RuvB hexamer assembles on each DNA strand where it exits the tetramer. Each RuvB hexamer is contacted by two RuvA subunits (via domain III) on 2 adjacent RuvB subunits; this complex drives branch migration. In the full resolvosome a probable DNA-RuvA(4)-RuvB(12)-RuvC(2) complex forms which resolves the HJ.

It localises to the cytoplasm. Functionally, the RuvA-RuvB-RuvC complex processes Holliday junction (HJ) DNA during genetic recombination and DNA repair, while the RuvA-RuvB complex plays an important role in the rescue of blocked DNA replication forks via replication fork reversal (RFR). RuvA specifically binds to HJ cruciform DNA, conferring on it an open structure. The RuvB hexamer acts as an ATP-dependent pump, pulling dsDNA into and through the RuvAB complex. HJ branch migration allows RuvC to scan DNA until it finds its consensus sequence, where it cleaves and resolves the cruciform DNA. The protein is Holliday junction branch migration complex subunit RuvA of Rhodopseudomonas palustris (strain TIE-1).